The chain runs to 321 residues: Serpentine receptor class delta-63 (321 aa).

The next 7 membrane-spanning stretches (helical) occupy residues 14 to 34, 41 to 61, 83 to 103, 128 to 148, 190 to 208, 240 to 260, and 273 to 293; these read LVYM…YNFT, VKYF…MAFA, YIGP…GIVV, LWTL…IVII, AAMS…GTYW, NFQI…YFMI, and TITV…IYFI.

The protein belongs to the nematode receptor-like protein srd family.

The protein localises to the membrane. The sequence is that of Serpentine receptor class delta-63 (srd-63) from Caenorhabditis elegans.